We begin with the raw amino-acid sequence, 406 residues long: Tryptophan synthase beta chain (406 aa).

An N6-(pyridoxal phosphate)lysine modification is found at K99.

It belongs to the TrpB family. As to quaternary structure, tetramer of two alpha and two beta chains. Pyridoxal 5'-phosphate serves as cofactor.

It carries out the reaction (1S,2R)-1-C-(indol-3-yl)glycerol 3-phosphate + L-serine = D-glyceraldehyde 3-phosphate + L-tryptophan + H2O. It functions in the pathway amino-acid biosynthesis; L-tryptophan biosynthesis; L-tryptophan from chorismate: step 5/5. Functionally, the beta subunit is responsible for the synthesis of L-tryptophan from indole and L-serine. The sequence is that of Tryptophan synthase beta chain from Methylobacterium sp. (strain 4-46).